We begin with the raw amino-acid sequence, 285 residues long: Shikimate dehydrogenase (NADP(+)) (285 aa).

Residues 20-22 (SIS) and serine 67 each bind shikimate. The active-site Proton acceptor is lysine 71. Shikimate-binding residues include asparagine 92 and aspartate 107. NADP(+)-binding positions include 129 to 133 (GAGGA) and isoleucine 227. Tyrosine 229 provides a ligand contact to shikimate. Glycine 250 contacts NADP(+).

Belongs to the shikimate dehydrogenase family. Homodimer.

The enzyme catalyses shikimate + NADP(+) = 3-dehydroshikimate + NADPH + H(+). It participates in metabolic intermediate biosynthesis; chorismate biosynthesis; chorismate from D-erythrose 4-phosphate and phosphoenolpyruvate: step 4/7. Its function is as follows. Involved in the biosynthesis of the chorismate, which leads to the biosynthesis of aromatic amino acids. Catalyzes the reversible NADPH linked reduction of 3-dehydroshikimate (DHSA) to yield shikimate (SA). In Streptococcus thermophilus (strain ATCC BAA-491 / LMD-9), this protein is Shikimate dehydrogenase (NADP(+)).